The following is a 239-amino-acid chain: Purine nucleoside phosphorylase DeoD-type (239 aa).

Residue His5 participates in a purine D-ribonucleoside binding. 2 residues coordinate phosphate: Gly21 and Arg25. Residue Lys27 is modified to N6-acetyllysine. Phosphate-binding positions include Arg44 and Arg88–Ser91. Residues Glu180–Glu182 and Ser204–Asp205 each bind a purine D-ribonucleoside. Asp205 functions as the Proton donor in the catalytic mechanism.

It belongs to the PNP/UDP phosphorylase family. As to quaternary structure, homohexamer; trimer of homodimers.

The enzyme catalyses a purine D-ribonucleoside + phosphate = a purine nucleobase + alpha-D-ribose 1-phosphate. The catalysed reaction is a purine 2'-deoxy-D-ribonucleoside + phosphate = a purine nucleobase + 2-deoxy-alpha-D-ribose 1-phosphate. Its function is as follows. Catalyzes the reversible phosphorolytic breakdown of the N-glycosidic bond in the beta-(deoxy)ribonucleoside molecules, with the formation of the corresponding free purine bases and pentose-1-phosphate. The protein is Purine nucleoside phosphorylase DeoD-type of Shigella dysenteriae serotype 1 (strain Sd197).